A 629-amino-acid polypeptide reads, in one-letter code: Polyadenylate-binding protein, cytoplasmic and nuclear (629 aa).

Residues 1–47 (MTLENKAEASPATKEETTTEAAPAEGEAKTESSEEKGSKEDQGDNAS) are disordered. Over residues 26-42 (GEAKTESSEEKGSKEDQ) the composition is skewed to basic and acidic residues. 4 RRM domains span residues 46-124 (ASLY…WSQR), 134-211 (GNIY…PHVP), 227-304 (TNVF…RAKK), and 330-407 (VNLY…LAQR). A disordered region spans residues 465–543 (GANPQMMMRP…RRKDGESRVA (79 aa)). 2 stretches are compositionally biased toward low complexity: residues 493-506 (MYGA…QGGF) and 514-531 (GGQP…QFRG). The PABC domain maps to 542-624 (VADSISNALE…AITAYNEYLN (83 aa)).

This sequence belongs to the polyadenylate-binding protein type-1 family.

It localises to the cytoplasm. Its subcellular location is the nucleus. Functionally, binds the poly(A) tail of mRNA. Appears to be an important mediator of the multiple roles of the poly(A) tail in mRNA biogenesis, stability and translation. In the nucleus, involved in both mRNA cleavage and polyadenylation. Is also required for efficient mRNA export to the cytoplasm. Acts in concert with a poly(A)-specific nuclease (PAN) to affect poly(A) tail shortening, which may occur concomitantly with either nucleocytoplasmic mRNA transport or translational initiation. In the cytoplasm, stimulates translation initiation and regulates mRNA decay through translation termination-coupled poly(A) shortening, probably mediated by PAN. This is Polyadenylate-binding protein, cytoplasmic and nuclear (PAB1) from Yarrowia lipolytica (strain CLIB 122 / E 150) (Yeast).